The primary structure comprises 160 residues: Phosphopantetheine adenylyltransferase (160 aa).

Ser-10 is a binding site for substrate. Residues Ser-10–Phe-11 and His-18 each bind ATP. The substrate site is built by Lys-42, Leu-74, and Arg-88. Residues Gly-89–Arg-91, Glu-99, and Tyr-124–Ser-130 each bind ATP.

This sequence belongs to the bacterial CoaD family. In terms of assembly, homohexamer. Requires Mg(2+) as cofactor.

The protein resides in the cytoplasm. The catalysed reaction is (R)-4'-phosphopantetheine + ATP + H(+) = 3'-dephospho-CoA + diphosphate. The protein operates within cofactor biosynthesis; coenzyme A biosynthesis; CoA from (R)-pantothenate: step 4/5. Its function is as follows. Reversibly transfers an adenylyl group from ATP to 4'-phosphopantetheine, yielding dephospho-CoA (dPCoA) and pyrophosphate. This chain is Phosphopantetheine adenylyltransferase, found in Bacillus velezensis (strain DSM 23117 / BGSC 10A6 / LMG 26770 / FZB42) (Bacillus amyloliquefaciens subsp. plantarum).